The chain runs to 402 residues: Zinc finger CCCH domain-containing protein 35 (402 aa).

2 consecutive C3H1-type zinc fingers follow at residues 117–144 and 152–176; these read CYSGTACPDFRKGGCKRGDACEFAHGVF and RYRTQPCKDGTACRRRVCFFAHTPD. Disordered regions lie at residues 180 to 211 and 232 to 258; these read VLPPSQQQGSNSPRGCGGGGAGAAASPLAESY and SSPTSTLVSPPRSPPSESPPLSPDAAG. A compositionally biased stretch (polar residues) spans 183–192; that stretch reads PSQQQGSNSP. A compositionally biased stretch (low complexity) spans 232 to 241; sequence SSPTSTLVSP. The span at 242–253 shows a compositional bias: pro residues; sequence PRSPPSESPPLS.

The sequence is that of Zinc finger CCCH domain-containing protein 35 from Oryza sativa subsp. japonica (Rice).